The sequence spans 204 residues: Proteasome subunit beta 1 (204 aa).

Positions 1–9 are cleaved as a propeptide — removed in mature form; by autocatalysis; sequence MSYEYGTGA. Catalysis depends on threonine 10, which acts as the Nucleophile.

The protein belongs to the peptidase T1B family. As to quaternary structure, the 20S proteasome core is composed of 14 alpha and 14 beta subunits that assemble into four stacked heptameric rings, resulting in a barrel-shaped structure. The two inner rings, each composed of seven catalytic beta subunits, are sandwiched by two outer rings, each composed of seven alpha subunits. The catalytic chamber with the active sites is on the inside of the barrel. Has a gated structure, the ends of the cylinder being occluded by the N-termini of the alpha-subunits. Is capped at one or both ends by the proteasome regulatory ATPase, PAN.

The protein localises to the cytoplasm. It catalyses the reaction Cleavage of peptide bonds with very broad specificity.. The formation of the proteasomal ATPase PAN-20S proteasome complex, via the docking of the C-termini of PAN into the intersubunit pockets in the alpha-rings, triggers opening of the gate for substrate entry. Interconversion between the open-gate and close-gate conformations leads to a dynamic regulation of the 20S proteasome proteolysis activity. Its function is as follows. Component of the proteasome core, a large protease complex with broad specificity involved in protein degradation. The sequence is that of Proteasome subunit beta 1 from Hyperthermus butylicus (strain DSM 5456 / JCM 9403 / PLM1-5).